A 333-amino-acid chain; its full sequence is HTH-type transcriptional repressor PurR (333 aa).

The HTH lacI-type domain occupies 2–56; it reads ATIKDVAKLASVSTTTVSHVINKTRFVAEATQKRVWEAVEELNYAPSAVARSLKC. The H-T-H motif DNA-binding region spans 4 to 23; sequence IKDVAKLASVSTTTVSHVIN. A DNA-binding region spans residues 48–56; that stretch reads SAVARSLKC. Phe73, Lys189, Thr191, Phe220, and Asp274 together coordinate hypoxanthine.

In terms of assembly, homodimer.

It functions in the pathway purine metabolism; purine nucleotide biosynthesis [regulation]. Is the main repressor of the genes involved in the de novo synthesis of purine nucleotides, regulating purB, purC, purEK, purF, purHD, purL, purMN and guaBA expression. PurR is allosterically activated to bind its cognate DNA by binding the purine corepressors, hypoxanthine or guanine, thereby effecting transcription repression. This Aliivibrio salmonicida (strain LFI1238) (Vibrio salmonicida (strain LFI1238)) protein is HTH-type transcriptional repressor PurR.